Consider the following 122-residue polypeptide: Large ribosomal subunit protein bL12 (122 aa).

The protein belongs to the bacterial ribosomal protein bL12 family. Homodimer. Part of the ribosomal stalk of the 50S ribosomal subunit. Forms a multimeric L10(L12)X complex, where L10 forms an elongated spine to which 2 to 4 L12 dimers bind in a sequential fashion. Binds GTP-bound translation factors.

Its function is as follows. Forms part of the ribosomal stalk which helps the ribosome interact with GTP-bound translation factors. Is thus essential for accurate translation. In Deinococcus geothermalis (strain DSM 11300 / CIP 105573 / AG-3a), this protein is Large ribosomal subunit protein bL12.